A 445-amino-acid polypeptide reads, in one-letter code: Histamine H3 receptor (445 aa).

At 1-40 the chain is on the extracellular side; it reads MERAPPDGLMNASGALAGEAAAAAGGARTFSAAWTAVLAA. An N-linked (GlcNAc...) asparagine glycan is attached at Asn11. The helical transmembrane segment at 41-61 threads the bilayer; that stretch reads LMALLIVATVLGNALVMLAFV. Over 62 to 71 the chain is Cytoplasmic; it reads ADSSLRTQNN. A helical membrane pass occupies residues 72–92; the sequence is FFLLNLAISDFLVGVFCIPLY. Residues 93–109 lie on the Extracellular side of the membrane; it reads VPYVLTGRWTFGRGLCK. Residues Cys108 and Cys189 are joined by a disulfide bond. Residues 110 to 130 traverse the membrane as a helical segment; the sequence is LWLVVDYLLCTSSVFNIVLIS. The Cytoplasmic segment spans residues 131-157; sequence YDRFLSVTRAVSYRAQQGDTRRAVRKM. The helical transmembrane segment at 158–178 threads the bilayer; the sequence is VLVWVLAFLLYGPAILSWEYL. Residues 179 to 197 are Extracellular-facing; sequence SGGSSIPEGHCYAEFFYNW. The chain crosses the membrane as a helical span at residues 198–218; that stretch reads YFLITASTLEFFTPFLSVTFF. The Cytoplasmic portion of the chain corresponds to 219–359; it reads NLSIYLNIQR…LSRDKKVAKS (141 aa). 2 disordered regions span residues 236–264 and 288–336; these read GGAREAGPDPLPEAQSSPPQPPPGCWGCW and AGEA…LEKR. Over residues 299-312 the composition is skewed to low complexity; that stretch reads AAASPTSSSGSSSR. A helical transmembrane segment spans residues 360 to 380; that stretch reads LAIIVSIFGLCWAPYTLLMII. Residues 381–398 lie on the Extracellular side of the membrane; that stretch reads RAACHGHCVPDYWYETSF. Residues 399 to 419 form a helical membrane-spanning segment; the sequence is WLLWANSAVNPVLYPLCHYSF. The Cytoplasmic segment spans residues 420-445; the sequence is RRAFTKLLCPQKLKVQPHSSLEHCWK. At Ser439 the chain carries Phosphoserine.

The protein belongs to the G-protein coupled receptor 1 family. Expressed widely and abundantly throughout the brain. Highly expressed in discrete neuronal populations such as pyramidal cells in cerebral cortex or cerebellar Purkinje cells.

It is found in the cell membrane. In terms of biological role, the H3 subclass of histamine receptors could mediate the histamine signals in CNS and peripheral nervous system. Signals through the inhibition of adenylate cyclase and displays high constitutive activity (spontaneous activity in the absence of agonist). The protein is Histamine H3 receptor (HRH3) of Cavia porcellus (Guinea pig).